We begin with the raw amino-acid sequence, 66 residues long: Conotoxin Bu1.4 (66 aa).

Positions 1-23 (MGMRMRMMFTVFLLVVLANTVVS) are cleaved as a signal peptide. Residues 24 to 46 (FPSDRDSDGADAEASDEPVEFER) constitute a propeptide that is removed on maturation. The segment at 25–48 (PSDRDSDGADAEASDEPVEFERDE) is disordered. Residues 32–42 (GADAEASDEPV) are compositionally biased toward acidic residues. Cystine bridges form between C51-C57 and C52-C62. T63 is subject to Threonine amide.

It belongs to the conotoxin A superfamily. As to expression, expressed by the venom duct.

The protein resides in the secreted. This chain is Conotoxin Bu1.4, found in Conus bullatus (Bubble cone).